A 658-amino-acid chain; its full sequence is Protein kinase and PP2C-like domain-containing protein (658 aa).

The Protein kinase domain maps to phenylalanine 30–isoleucine 314. ATP contacts are provided by residues isoleucine 36–valine 44 and lysine 57. Aspartate 149 (proton acceptor) is an active-site residue. Residues serine 392 to leucine 648 enclose the PPM-type phosphatase domain. Mn(2+) contacts are provided by aspartate 428, glycine 429, aspartate 599, and aspartate 639.

In the N-terminal section; belongs to the protein kinase superfamily. Ser/Thr protein kinase family. The protein in the C-terminal section; belongs to the PP2C family. Mg(2+) is required as a cofactor. Mn(2+) serves as cofactor.

It carries out the reaction L-seryl-[protein] + ATP = O-phospho-L-seryl-[protein] + ADP + H(+). The catalysed reaction is L-threonyl-[protein] + ATP = O-phospho-L-threonyl-[protein] + ADP + H(+). The enzyme catalyses O-phospho-L-seryl-[protein] + H2O = L-seryl-[protein] + phosphate. It catalyses the reaction O-phospho-L-threonyl-[protein] + H2O = L-threonyl-[protein] + phosphate. In Arabidopsis thaliana (Mouse-ear cress), this protein is Protein kinase and PP2C-like domain-containing protein.